Consider the following 201-residue polypeptide: Ribonuclease HII (201 aa).

One can recognise an RNase H type-2 domain in the interval 15 to 201 (AIIAGVDEAG…FAPIKAYGAP (187 aa)). A divalent metal cation is bound by residues aspartate 21, glutamate 22, and aspartate 113.

The protein belongs to the RNase HII family. The cofactor is Mn(2+). It depends on Mg(2+) as a cofactor.

It localises to the cytoplasm. It carries out the reaction Endonucleolytic cleavage to 5'-phosphomonoester.. In terms of biological role, endonuclease that specifically degrades the RNA of RNA-DNA hybrids. This is Ribonuclease HII from Bordetella pertussis (strain Tohama I / ATCC BAA-589 / NCTC 13251).